The following is a 605-amino-acid chain: Apoptosis-inducing factor 3 (605 aa).

Over residues 18–29 (VLPEKERGKEEL) the composition is skewed to basic and acidic residues. Residues 18–44 (VLPEKERGKEELSASGKGSPRGYQGNG) are disordered. The Rieske domain occupies 70-165 (ATVCHVKDLE…VKIEKEKVTI (96 aa)). [2Fe-2S] cluster-binding residues include Cys109, His111, Cys128, and His131. Residues 201 to 205 (GAGAA), Arg235, Lys240, Val270, Asp467, and Trp514 contribute to the FAD site.

It belongs to the FAD-dependent oxidoreductase family.

The protein localises to the mitochondrion. Induces apoptosis through a caspase dependent pathway. Reduces mitochondrial membrane potential. This Mus musculus (Mouse) protein is Apoptosis-inducing factor 3 (Aifm3).